The chain runs to 157 residues: Transcriptional repressor NrdR (157 aa).

Positions 1-22 are disordered; the sequence is MRCPKCGATKSSVIDSRQAEEG. A zinc finger lies at 3–34; sequence CPKCGATKSSVIDSRQAEEGNTIRRRRECDEC. Residues 49-139 form the ATP-cone domain; it reads LVVVKKDGTR…VYRSFKDVSE (91 aa).

This sequence belongs to the NrdR family. It depends on Zn(2+) as a cofactor.

Negatively regulates transcription of bacterial ribonucleotide reductase nrd genes and operons by binding to NrdR-boxes. This Streptococcus pneumoniae (strain Hungary19A-6) protein is Transcriptional repressor NrdR.